The primary structure comprises 350 residues: Protein-glutamate methylesterase/protein-glutamine glutaminase (350 aa).

In terms of domain architecture, Response regulatory spans 5–122 (KVLCVDDSAL…RDGLIEYSEV (118 aa)). A 4-aspartylphosphate modification is found at Asp56. Positions 152 to 346 (PFASSEKLVI…ERILTRLGDR (195 aa)) constitute a CheB-type methylesterase domain. Active-site residues include Ser165, His191, and Asp288.

The protein belongs to the CheB family. Post-translationally, phosphorylated by CheA. Phosphorylation of the N-terminal regulatory domain activates the methylesterase activity.

It localises to the cytoplasm. It carries out the reaction [protein]-L-glutamate 5-O-methyl ester + H2O = L-glutamyl-[protein] + methanol + H(+). The catalysed reaction is L-glutaminyl-[protein] + H2O = L-glutamyl-[protein] + NH4(+). Involved in chemotaxis. Part of a chemotaxis signal transduction system that modulates chemotaxis in response to various stimuli. Catalyzes the demethylation of specific methylglutamate residues introduced into the chemoreceptors (methyl-accepting chemotaxis proteins or MCP) by CheR. Also mediates the irreversible deamidation of specific glutamine residues to glutamic acid. This Bordetella parapertussis (strain 12822 / ATCC BAA-587 / NCTC 13253) protein is Protein-glutamate methylesterase/protein-glutamine glutaminase.